Here is a 403-residue protein sequence, read N- to C-terminus: MELLFTATLLHFIRLFEKAHEENVKKADLEKKKAANETEMKHVVHNSWLNNLNIRASTLIDQRRAFNTMIMLQKVEMPLPDMMAAVLGMDESVLDVDQIENLIRFCPTKEEMKLLKNYTGDKATLGKCEQYFLELMKVPGVESKLRVFSFKIHFGTQIKELNKGLNTVNSACEEIRTSQKLKEIMKIILCLGNILNQGTARGSAVGFKLDSLLNLSEKCSANTNMTLMHYLCKVLASKASDLLDFHKDLENLESASKIHLKSLAEEMVAITKGLQKLNQELTASESDGPISEVFRKLLKDFISVAETQVATVSSLYSSVGGNTDALVHYFGEDPNDYPFEQVTATLLSFVRLFTTAAHQENVKQAELEKKKAAKEAEMEKTKKRVSLTNKKASGVGEEESCLI.

Residues 1–380 (MELLFTATLL…KAAKEAEMEK (380 aa)) enclose the FH2 domain. Residues 373 to 403 (AKEAEMEKTKKRVSLTNKKASGVGEEESCLI) are disordered.

The protein belongs to the formin-like family. Class-II subfamily.

The protein is Formin-like protein 21b (FH21B) of Arabidopsis thaliana (Mouse-ear cress).